A 307-amino-acid chain; its full sequence is Oxygen-dependent coproporphyrinogen-III oxidase (307 aa).

Ser-99 serves as a coordination point for substrate. Residues His-103 and His-113 each contribute to the a divalent metal cation site. The active-site Proton donor is His-113. Residue 115 to 117 participates in substrate binding; that stretch reads NVR. A divalent metal cation-binding residues include His-152 and His-182. Residues 247 to 282 are important for dimerization; that stretch reads YVEFNLVFDRGTLFGLQSGGRTESILLSMPPTAGWR. Position 265-267 (265-267) interacts with substrate; sequence GGR.

It belongs to the aerobic coproporphyrinogen-III oxidase family. As to quaternary structure, homodimer. Requires a divalent metal cation as cofactor.

It localises to the cytoplasm. It catalyses the reaction coproporphyrinogen III + O2 + 2 H(+) = protoporphyrinogen IX + 2 CO2 + 2 H2O. The protein operates within porphyrin-containing compound metabolism; protoporphyrin-IX biosynthesis; protoporphyrinogen-IX from coproporphyrinogen-III (O2 route): step 1/1. In terms of biological role, involved in the heme biosynthesis. Catalyzes the aerobic oxidative decarboxylation of propionate groups of rings A and B of coproporphyrinogen-III to yield the vinyl groups in protoporphyrinogen-IX. This chain is Oxygen-dependent coproporphyrinogen-III oxidase, found in Burkholderia pseudomallei (strain 1106a).